The chain runs to 271 residues: Carboxy-terminal domain RNA polymerase II polypeptide A small phosphatase 2 (271 aa).

Position 5 is a phosphoserine (S5). Residues E97–L255 form the FCP1 homology domain. Catalysis depends on D107, which acts as the 4-aspartylphosphate intermediate. 3 residues coordinate Mg(2+): D107, D109, and N218. The active-site Proton donor is D109.

As to quaternary structure, monomer. Interacts with REST. Requires Mg(2+) as cofactor. Expression is restricted to non-neuronal tissues. Highest expression in pancreas and lowest in liver.

It localises to the nucleus. The catalysed reaction is O-phospho-L-seryl-[protein] + H2O = L-seryl-[protein] + phosphate. The enzyme catalyses O-phospho-L-threonyl-[protein] + H2O = L-threonyl-[protein] + phosphate. Preferentially catalyzes the dephosphorylation of 'Ser-5' within the tandem 7 residue repeats in the C-terminal domain (CTD) of the largest RNA polymerase II subunit POLR2A. Negatively regulates RNA polymerase II transcription, possibly by controlling the transition from initiation/capping to processive transcript elongation. Recruited by REST to neuronal genes that contain RE-1 elements, leading to neuronal gene silencing in non-neuronal cells. May contribute to the development of sarcomas. The polypeptide is Carboxy-terminal domain RNA polymerase II polypeptide A small phosphatase 2 (CTDSP2) (Homo sapiens (Human)).